The sequence spans 291 residues: Hydroxysteroid 11-beta-dehydrogenase 1-like protein B (291 aa).

The N-terminal stretch at methionine 1–alanine 17 is a signal peptide. Residues glycine 40–arginine 66, aspartate 91–methionine 92, and asparagine 118–isoleucine 120 each bind NADP(+). Serine 170 contacts substrate. Residue tyrosine 183 is the Proton acceptor of the active site. NADP(+) contacts are provided by residues tyrosine 183–lysine 187 and glycine 216–asparagine 222.

Belongs to the short-chain dehydrogenases/reductases (SDR) family.

The protein resides in the secreted. It catalyses the reaction cortisone + NADPH + H(+) = cortisol + NADP(+). In terms of biological role, unidirectional NADP(+)-dependent cortisol dehydrogenase (in vitro). In Xenopus laevis (African clawed frog), this protein is Hydroxysteroid 11-beta-dehydrogenase 1-like protein B (hsd11b1l-b).